The following is a 429-amino-acid chain: Histidinol dehydrogenase (429 aa).

Y131, Q193, and N216 together coordinate NAD(+). Residues S239, Q261, and H264 each coordinate substrate. Q261 and H264 together coordinate Zn(2+). Catalysis depends on proton acceptor residues E327 and H328. Substrate is bound by residues H328, D361, E415, and H420. D361 provides a ligand contact to Zn(2+). H420 is a binding site for Zn(2+).

Belongs to the histidinol dehydrogenase family. Zn(2+) serves as cofactor.

It carries out the reaction L-histidinol + 2 NAD(+) + H2O = L-histidine + 2 NADH + 3 H(+). Its pathway is amino-acid biosynthesis; L-histidine biosynthesis; L-histidine from 5-phospho-alpha-D-ribose 1-diphosphate: step 9/9. Catalyzes the sequential NAD-dependent oxidations of L-histidinol to L-histidinaldehyde and then to L-histidine. The protein is Histidinol dehydrogenase (hisD) of Methanocaldococcus jannaschii (strain ATCC 43067 / DSM 2661 / JAL-1 / JCM 10045 / NBRC 100440) (Methanococcus jannaschii).